Consider the following 698-residue polypeptide: Probable xyloglucan glycosyltransferase 2 (698 aa).

2 helical membrane-spanning segments follow: residues 124–144 and 190–210; these read GFLA…WNGW and ILLF…CFWI. The active site involves Asp272. Residues Asp331 and Asp333 each contribute to the substrate site. Asp425 is a catalytic residue. A run of 4 helical transmembrane segments spans residues 503–523, 528–548, 653–668, and 673–693; these read LILP…TMFV, LPVW…ILPS, LALS…RSLL, and IHFY…LDLI.

This sequence belongs to the glycosyltransferase 2 family. Plant cellulose synthase-like C subfamily.

Its subcellular location is the golgi apparatus membrane. Probable beta-1,4-glucan synthase rather involved in the synthesis of the xyloglucan backbone than cellulose. Seems to work simultaneously with xyloglucan 6-xylosyltransferase. Xyloglucan is a noncellulosic polysaccharides of plant cell wall and consists of a glucan backbone substituted by xylose, galactose and fucose. The polypeptide is Probable xyloglucan glycosyltransferase 2 (CSLC2) (Oryza sativa subsp. indica (Rice)).